A 951-amino-acid chain; its full sequence is Spliceosome associated factor 3, U4/U6 recycling protein (951 aa).

Positions 1–58 (MAATGNEEQTLLPDIEEEAEGMEREMESEDDEEEGMGVEHSEEEDEEDTSEDERENEA) are disordered. The segment covering 14 to 56 (DIEEEAEGMEREMESEDDEEEGMGVEHSEEEDEEDTSEDEREN) has biased composition (acidic residues). 8 HAT repeats span residues 88–120 (GKLH…DEIR), 126–157 (SDRE…YSIG), 163–199 (GGIE…FEIV), 222–255 (AQLE…WADD), 304–336 (GDPA…YLDR), 339–371 (KIKD…ALER), 374–410 (ADHQ…YLRR), and 467–500 (KNMQ…LERS). The segment at 517–941 (CTSDYPEHVC…LDTQTKSLSN (425 aa)) is necessary and sufficient for U6 snRNA binding. Residues 533–593 (ERVEGSLEDW…VKADKKAQKK (61 aa)) are a coiled coil. The segment covering 567 to 581 (EALHARQEEEKAEQR) has biased composition (basic and acidic residues). The disordered stretch occupies residues 567 to 686 (EALHARQEEE…HDMPKEQRKD (120 aa)). A compositionally biased stretch (basic residues) spans 582–596 (RKVKADKKAQKKGQK). A compositionally biased stretch (acidic residues) spans 608-619 (DDDEEEWGEEAE). The span at 674–686 (RQPHDMPKEQRKD) shows a compositional bias: basic and acidic residues. RRM domains lie at 688-766 (NCVF…PCVD) and 785-862 (HKIF…ISNP). A disordered region spans residues 905-938 (RQSTPDAKAENGTISAPHATVTDGETSLDTQTKS). Over residues 927–938 (DGETSLDTQTKS) the composition is skewed to polar residues.

It is found in the nucleus. The protein resides in the nucleoplasm. It localises to the cajal body. Its subcellular location is the nucleus speckle. The protein localises to the cytoplasm. In terms of biological role, U6 snRNP-binding protein that functions as a recycling factor of the splicing machinery. Promotes the initial reassembly of U4 and U6 snRNPs following their ejection from the spliceosome during its maturation. May also function as a substrate targeting factor for deubiquitinases and mediate the deubiquitination of components of the spliceosome and histones. The protein is Spliceosome associated factor 3, U4/U6 recycling protein of Danio rerio (Zebrafish).